Reading from the N-terminus, the 658-residue chain is MKLVTCGLPYANGKAHVGHLRTYVPADVYVRYLRMSGEEVVFVCGSDCHGTPIVVNAEQQGLSPKELVDIYHEHFIKIFDALNIKFDFYGRTDSDYHHHRTTEIVKRLIEKGYVYPKEIQLAYCPKCQRFLPDRYVEGICPYCGALARGDECDQGCGRHLEPGEIKEPRCKICGSKAEFRSQRHYFFKLTEFQDFLEDYLSKLKGTENALNYARNWVKNLRDWCITRNLEWGVRFPGEPNLVVYVWVDAPIGYISFTEKACEEKGCDWRKIWIDGDAEIIHFIGLDIVYHHCIFWPAMLKGADYALPSAVVASGMVKVEGKTFSKSRGYVVWVEEDYLKSGLSPDYLRYYIVNYTSHQKDLNFSWEVFREKVNNEVIATLGNFLYRVLLFAWKNFGEVRMEGVDEEVLEKIRETEQKILSALEEWEFKAASDAFMELATYGNVYFQNAKPWELIKTDKEAARRAVASCLQLAKALIIFAYPVMPESMERMAKAIGLDLENVRLSDAYKVDEVMKLSKPEVPFAKVEDEVIEKLQKVMEKRFRGEGEKMEQKEEISIEDFQKLDIRIGRVLKAEKVKKSKKLIKLIIDIGDEQRQIVSGIAEDYTPEELEGKLVVVLANLKPAKFMGVESRGMILAAEKDGKAVLLTPEKEVEPGTRVC.

The 'HIGH' region signature appears at 9-19; it reads PYANGKAHVGH. Zn(2+) is bound by residues Cys140, Cys143, Cys152, and Cys156. Residues 322 to 326 carry the 'KMSKS' region motif; sequence TFSKS. Lys325 lines the ATP pocket. One can recognise a tRNA-binding domain in the interval 558–658; it reads DFQKLDIRIG…KEVEPGTRVC (101 aa).

Belongs to the class-I aminoacyl-tRNA synthetase family. MetG type 1 subfamily. As to quaternary structure, homodimer. It depends on Zn(2+) as a cofactor.

Its subcellular location is the cytoplasm. The enzyme catalyses tRNA(Met) + L-methionine + ATP = L-methionyl-tRNA(Met) + AMP + diphosphate. Functionally, is required not only for elongation of protein synthesis but also for the initiation of all mRNA translation through initiator tRNA(fMet) aminoacylation. In Archaeoglobus fulgidus (strain ATCC 49558 / DSM 4304 / JCM 9628 / NBRC 100126 / VC-16), this protein is Methionine--tRNA ligase.